Consider the following 1335-residue polypeptide: Xanthine dehydrogenase/oxidase (1335 aa).

The region spanning 7–94 (DELVFFVNGK…HVAVTTVEGI (88 aa)) is the 2Fe-2S ferredoxin-type domain. Cysteine 46, cysteine 51, cysteine 54, cysteine 76, cysteine 115, cysteine 118, cysteine 150, and cysteine 152 together coordinate [2Fe-2S] cluster. One can recognise an FAD-binding PCMH-type domain in the interval 231–416 (FEGERVTWIQ…VSIVIPYSRK (186 aa)). FAD is bound by residues 259–266 (LVVGNTEI), phenylalanine 339, 349–353 (SIGGN), aspartate 362, leucine 406, and lysine 424. A disulfide bridge connects residues cysteine 538 and cysteine 995. Residues glutamine 770 and phenylalanine 801 each contribute to the Mo-molybdopterin site. 2 residues coordinate substrate: glutamate 805 and arginine 883. Arginine 915 is a binding site for Mo-molybdopterin. Substrate is bound by residues phenylalanine 917 and threonine 1013. Residue alanine 1082 participates in Mo-molybdopterin binding. Catalysis depends on glutamate 1264, which acts as the Proton acceptor.

It belongs to the xanthine dehydrogenase family. In terms of assembly, homodimer. Interacts with BTN1A1. The cofactor is FAD. Mo-molybdopterin serves as cofactor. Requires [2Fe-2S] cluster as cofactor. In terms of processing, subject to partial proteolysis; this alters the enzyme from the dehydrogenase form (D) to the oxidase form (O). Contains sulfhydryl groups that are easily oxidized (in vitro); this alters the enzyme from the dehydrogenase form (D) to the oxidase form (O).

The protein localises to the cytoplasm. The protein resides in the peroxisome. It localises to the secreted. It catalyses the reaction xanthine + NAD(+) + H2O = urate + NADH + H(+). It carries out the reaction hypoxanthine + NAD(+) + H2O = xanthine + NADH + H(+). The enzyme catalyses xanthine + O2 + H2O = urate + H2O2. Its activity is regulated as follows. Can be converted from the dehydrogenase form (D) to the oxidase form (O) irreversibly by proteolysis or reversibly through the oxidation of sulfhydryl groups. In terms of biological role, key enzyme in purine degradation. Catalyzes the oxidation of hypoxanthine to xanthine. Catalyzes the oxidation of xanthine to uric acid. Contributes to the generation of reactive oxygen species. This chain is Xanthine dehydrogenase/oxidase (Xdh), found in Mus musculus (Mouse).